A 274-amino-acid chain; its full sequence is Urease accessory protein UreD (274 aa).

The protein belongs to the UreD family. UreD, UreF and UreG form a complex that acts as a GTP-hydrolysis-dependent molecular chaperone, activating the urease apoprotein by helping to assemble the nickel containing metallocenter of UreC. The UreE protein probably delivers the nickel.

The protein localises to the cytoplasm. In terms of biological role, required for maturation of urease via the functional incorporation of the urease nickel metallocenter. This Thermosynechococcus vestitus (strain NIES-2133 / IAM M-273 / BP-1) protein is Urease accessory protein UreD.